Consider the following 394-residue polypeptide: Class II hydrophobin TH1 (394 aa).

A signal peptide spans 1-16; sequence MKFLAAASLLVASTLA. A disordered region spans residues 17–42; it reads VPTSSGGSCRPRPPPGGGNGGNGGNG. Residues 33–42 show a composition bias toward gly residues; sequence GGNGGNGGNG. Positions 48-117 are hydrophobin 1; that stretch reads GYQPCPAGLY…GQAVLCQDSI (70 aa). 4 disulfides stabilise this stretch: C52/C101, C62/C92, C63/C75, and C102/C113. Residues 135–157 form a disordered region; it reads GNGGNNGGNTDYPGGNGGNNGGN. A compositionally biased stretch (gly residues) spans 148–157; that stretch reads GGNGGNNGGN. Hydrophobin stretches follow at residues 200-270 and 326-394; these read GYQA…QPAI and GSFK…CTGA.

It belongs to the cerato-ulmin hydrophobin family. In terms of assembly, homotetramer. Further self-assembles to form highly ordered films at water-air interfaces through intermolecular interactions. Several N-termini starting at positions 17, 20, 22, 28 and 48 have been identified by direct sequencing. Post-translationally, contains a number of intrachain disulfide bonds. In terms of processing, not glycosylated.

It is found in the secreted. The protein resides in the cell wall. Aerial growth, conidiation, and dispersal of filamentous fungi in the environment rely upon a capability of their secreting small amphipathic proteins called hydrophobins (HPBs) with low sequence identity. Class I can self-assemble into an outermost layer of rodlet bundles on aerial cell surfaces, conferring cellular hydrophobicity that supports fungal growth, development and dispersal; whereas Class II form highly ordered films at water-air interfaces through intermolecular interactions but contribute nothing to the rodlet structure. TH1 is a class II hydrophobin that reduces water surface tension dramatically upon assembly at the water-air interface and plays a role in the formation of aerial hyphae. This chain is Class II hydrophobin TH1 (TH1), found in Claviceps fusiformis (Ergot fungus).